A 783-amino-acid chain; its full sequence is Tripartite motif-containing protein 67 (783 aa).

The RING-type; degenerate zinc-finger motif lies at 7-42 (CPVCGSLFREPIILPCSHNVCLPCARTIAVQTPDGE). The B box-type 1; degenerate zinc-finger motif lies at 206–253 (AICQLCDRTPPEPAATLCEQCDVLYCSACQLKCHPSRGPFAKHRLVQP). Residues 247 to 295 (KHRLVQPPPPPPPPAEAASGPTGTAQGAPSGGGGCKSPGGAGAGATGGS) form a disordered region. Residues 252–261 (QPPPPPPPPA) are compositionally biased toward pro residues. Positions 275 to 293 (PSGGGGCKSPGGAGAGATG) are enriched in gly residues. The B box-type 2 zinc finger occupies 298–340 (RKFPTCPEHEMENYSMYCVSCRTPVCYLCLEEGRHAKHEVKPL). Cys303, His306, Cys326, and His332 together coordinate Zn(2+). Residues 345-382 (KQHKAQLSQALNGVSDKAKEAKEFLVQLKNILQQIQEN) adopt a coiled-coil conformation. Residues 448–506 (IKENDPSGFLQISDALIKRVQVSQEQWVKGALEPKVSAEFDLTLDSEPLLQAIHQLDFI) form the COS domain. The Fibronectin type-III domain occupies 513–607 (PPVPLLQLEK…KTVVLQTSDV (95 aa)). The region spanning 589–780 (NSSGVGPYSK…VPTNLGRPKL (192 aa)) is the B30.2/SPRY domain.

It belongs to the TRIM/RBCC family.

It localises to the cytoplasm. Its subcellular location is the cytoskeleton. This Homo sapiens (Human) protein is Tripartite motif-containing protein 67 (TRIM67).